Reading from the N-terminus, the 614-residue chain is tRNA uridine 5-carboxymethylaminomethyl modification enzyme MnmG (614 aa).

An FAD-binding site is contributed by 10–15 (GAGHAG). 271–285 (GPRYCPSIEDKIVKF) serves as a coordination point for NAD(+).

It belongs to the MnmG family. Homodimer. Heterotetramer of two MnmE and two MnmG subunits. The cofactor is FAD.

The protein localises to the cytoplasm. Its function is as follows. NAD-binding protein involved in the addition of a carboxymethylaminomethyl (cmnm) group at the wobble position (U34) of certain tRNAs, forming tRNA-cmnm(5)s(2)U34. This Ureaplasma parvum serovar 3 (strain ATCC 27815 / 27 / NCTC 11736) protein is tRNA uridine 5-carboxymethylaminomethyl modification enzyme MnmG.